Here is a 786-residue protein sequence, read N- to C-terminus: Endonuclease MutS2 (786 aa).

335–342 (GPNTGGKT) is an ATP binding site. The interval 529–549 (SQKNAERERKEAEEHRKQSEK) is disordered. A Smr domain is found at 711–786 (LDLRGERYED…GLGVTVVELK (76 aa)).

Belongs to the DNA mismatch repair MutS family. MutS2 subfamily. As to quaternary structure, homodimer. Binds to stalled ribosomes, contacting rRNA.

Its function is as follows. Endonuclease that is involved in the suppression of homologous recombination and thus may have a key role in the control of bacterial genetic diversity. In terms of biological role, acts as a ribosome collision sensor, splitting the ribosome into its 2 subunits. Detects stalled/collided 70S ribosomes which it binds and splits by an ATP-hydrolysis driven conformational change. Acts upstream of the ribosome quality control system (RQC), a ribosome-associated complex that mediates the extraction of incompletely synthesized nascent chains from stalled ribosomes and their subsequent degradation. Probably generates substrates for RQC. This chain is Endonuclease MutS2, found in Bacillus mycoides (strain KBAB4) (Bacillus weihenstephanensis).